The following is a 681-amino-acid chain: Sodium/glucose cotransporter 4 (681 aa).

Residues 1 to 36 (MSKELAAMGPGASGDGVRTETAPHIALDSRVGLHAY) are Extracellular-facing. Residues 37-57 (DISVVVIYFVFVIAVGIWSSI) traverse the membrane as a helical segment. Over 58 to 75 (RASRGTIGGYFLAGRSMS) the chain is Cytoplasmic. A helical membrane pass occupies residues 76-98 (WWPIGASLMSSNVGSGLFIGLAG). Over 99–114 (TGAAGGLAVGGFEWNA) the chain is Extracellular. The helical transmembrane segment at 115 to 135 (TWLLLALGWVFVPVYIAAGVV) threads the bilayer. Residues 136–157 (TMPQYLKKRFGGQRIQVYMSVL) are Cytoplasmic-facing. A helical transmembrane segment spans residues 158–178 (SLILYIFTKISTDIFSGALFI). Topologically, residues 179–190 (QMALGWNLYLST) are extracellular. A helical membrane pass occupies residues 191 to 211 (GILLVVTAVYTIAGGLMAVIY). Over 212 to 217 (TDALQT) the chain is Cytoplasmic. A helical membrane pass occupies residues 218-238 (VIMVGGALVLMFLGFQDVGWY). Residues 239–275 (PGLEQRYRQAIPNVTVPNTTCHLPRPDAFHILRDPVS) are Extracellular-facing. The N-linked (GlcNAc...) asparagine glycan is linked to Asn251. Residues 276–296 (GDIPWPGLIFGLTVLATWCWC) traverse the membrane as a helical segment. The Cytoplasmic portion of the chain corresponds to 297-317 (TDQVIVQRSLSAKSLSHAKGG). A helical membrane pass occupies residues 318 to 338 (SVLGGYLKILPMFFIVMPGMI). Residues 339–383 (SRALFPDEVGCVDPDVCQRICGARVGCSNIAYPKLVMALMPVGLR) are Extracellular-facing. The chain crosses the membrane as a helical span at residues 384-406 (GLMIAVIMAALMSSLTSIFNSSS). At 407-427 (TLFTIDVWQRFRRKSTEQELM) the chain is on the cytoplasmic side. The helical transmembrane segment at 428–448 (VVGRVFVVFLVVISILWIPII) threads the bilayer. Residues 449 to 459 (QSSNSGQLFDY) are Extracellular-facing. The chain crosses the membrane as a helical span at residues 460–480 (IQAVTSYLAPPITALFLLAIF). Topologically, residues 481–487 (CKRVTEP) are cytoplasmic. The helical transmembrane segment at 488–508 (GAFWGLVFGLGVGLLRMILEF) threads the bilayer. Residues 509-530 (SYPAPACGEVDRRPAVLKDFHY) lie on the Extracellular side of the membrane. Residues 531-551 (LYFAILLCGLTAIVIVIVSLC) traverse the membrane as a helical segment. At 552–660 (TTPIPEEQLT…SIEEEPLWRH (109 aa)) the chain is on the cytoplasmic side. Residues 579–591 (AHESTPEISERPA) are compositionally biased toward basic and acidic residues. Positions 579–614 (AHESTPEISERPAGECPAGGGAAENSSLGQEQPEAP) are disordered. Phosphoserine occurs at positions 604 and 605. The helical transmembrane segment at 661–681 (VCNINAVLLLAINIFLWGYFA) threads the bilayer.

This sequence belongs to the sodium:solute symporter (SSF) (TC 2.A.21) family. As to expression, expressed in the small intestine, kidney and liver.

The protein resides in the cell membrane. The catalysed reaction is D-mannose(out) + n Na(+)(out) = D-mannose(in) + n Na(+)(in). Functionally, electrogenic Na(+)-coupled sugar symporter that may play a primary role in D-mannose and possibly D-fructose and D-glucose transport at the plasma membrane. Transporter activity is driven by a transmembrane Na(+) electrochemical gradient set by the Na(+)/K(+) pump. Exclusively recognizes sugar substrates having a pyranose ring with an axial hydroxyl group on carbon 2. The sequence is that of Sodium/glucose cotransporter 4 from Homo sapiens (Human).